The primary structure comprises 307 residues: Protease HtpX homolog (307 aa).

2 helical membrane passes run V10–L30 and I40–V60. H144 serves as a coordination point for Zn(2+). E145 is a catalytic residue. Residue H148 participates in Zn(2+) binding. A run of 2 helical transmembrane segments spans residues L156–F176 and F187–G207. E213 contributes to the Zn(2+) binding site.

Belongs to the peptidase M48B family. The cofactor is Zn(2+).

Its subcellular location is the cell membrane. The protein is Protease HtpX homolog of Picrophilus torridus (strain ATCC 700027 / DSM 9790 / JCM 10055 / NBRC 100828 / KAW 2/3).